Here is a 1013-residue protein sequence, read N- to C-terminus: Zinc finger and BTB domain-containing protein 4 (1013 aa).

Positions 30-152 (CDVTLIAGDT…IYSARLALPG (123 aa)) constitute a BTB domain. Residue Lys-40 forms a Glycyl lysine isopeptide (Lys-Gly) (interchain with G-Cter in SUMO2) linkage. The span at 67-110 (LPPATGGAAPNPATTTAASSSSSSSSSSSSSSSSASSSSSSSSS) shows a compositional bias: low complexity. 2 disordered regions span residues 67–124 (LPPA…SPPR) and 183–221 (DAWV…AEAQ). Pro residues predominate over residues 111–121 (SPPPASPPASS). The segment at 186–348 (VPPTPAPMAT…CRYCEKVFAL (163 aa)) is interaction with CBFA2T3. A C2H2-type 1; atypical zinc finger spans residues 234–256 (LPCPQCGKSFIHPKRLQTHEAQC). The tract at residues 257-281 (RRGASTRGSTGLGAGGAGPGGPAGV) is disordered. The segment covering 266 to 279 (TGLGAGGAGPGGPA) has biased composition (gly residues). 3 C2H2-type zinc fingers span residues 309–331 (YVCA…SNVH), 337–359 (YPCR…EVWH), and 365–388 (YQCI…RAFH). Residue Ser-391 is modified to Phosphoserine. Disordered stretches follow at residues 428-765 (KTYS…STRF), 783-852 (HGQR…DPII), 883-904 (GREP…AGEG), and 972-1013 (VNPQ…GDVG). Residues 453 to 470 (ASPPPGPPPAPEPGPPPS) show a composition bias toward pro residues. Composition is skewed to low complexity over residues 496-506 (TASTGGSQAAS) and 531-554 (ATPT…ATTT). Lys-573 is covalently cross-linked (Glycyl lysine isopeptide (Lys-Gly) (interchain with G-Cter in SUMO2)). A compositionally biased stretch (gly residues) spans 576-590 (GGIGGGGGPPTGAGR). Residues 608–625 (IGEEAIVKRRISETDLRP) show a composition bias toward basic and acidic residues. Lys-615 participates in a covalent cross-link: Glycyl lysine isopeptide (Lys-Gly) (interchain with G-Cter in SUMO2). Residues 627-663 (ELSGEEMEESEEDEEEEDEEEEEEDEEESKAGGEDQL) are a coiled coil. A compositionally biased stretch (acidic residues) spans 629-654 (SGEEMEESEEDEEEEDEEEEEEDEEE). The span at 678 to 689 (AAGGASVGGSGL) shows a compositional bias: gly residues. C2H2-type zinc fingers lie at residues 726–748 (HRCG…QEAH) and 765–787 (FTCP…GQRH). Phosphothreonine; by HIPK2 is present on residues Thr-795 and Thr-797. A compositionally biased stretch (low complexity) spans 836-846 (TAAEEASETAS). The span at 883 to 902 (GREPGGGRGKSGSEGPVGAG) shows a compositional bias: gly residues. Positions 976–995 (AAPPAPPTPPPPTLPPPIPP) are enriched in pro residues. Residue Thr-983 is modified to Phosphothreonine; by HIPK2. Residues 997 to 1013 (GEGERAGVERTQKGDVG) show a composition bias toward basic and acidic residues.

Interacts with HIPK2. Interacts with CBFA2T3. Interacts with ZBTB38. Phosphorylated by HIPK2. This phosphorylation reduces stability and triggers ZBTB4 protein degradation in response to DNA damage.

The protein localises to the nucleus. Its subcellular location is the chromosome. In terms of biological role, transcriptional repressor with bimodal DNA-binding specificity. Represses transcription in a methyl-CpG-dependent manner. Binds with a higher affinity to methylated CpG dinucleotides in the consensus sequence 5'-CGCG-3' but can also bind to the non-methylated consensus sequence 5'-CTGCNA-3' also known as the consensus kaiso binding site (KBS). Can also bind specifically to a single methyl-CpG pair and can bind hemimethylated DNA but with a lower affinity compared to methylated DNA. Plays a role in postnatal myogenesis, may be involved in the regulation of satellite cells self-renewal. The polypeptide is Zinc finger and BTB domain-containing protein 4 (ZBTB4) (Homo sapiens (Human)).